We begin with the raw amino-acid sequence, 107 residues long: Small ribosomal subunit protein uS10m (107 aa).

It belongs to the universal ribosomal protein uS10 family.

It localises to the mitochondrion. The polypeptide is Small ribosomal subunit protein uS10m (RPS10) (Prototheca wickerhamii).